The following is a 45-amino-acid chain: uncharacterized protein (45 aa).

This is an uncharacterized protein from Bacillus subtilis (strain 168).